Here is a 354-residue protein sequence, read N- to C-terminus: 3-dehydroquinate synthase (354 aa).

NAD(+) contacts are provided by residues 100–104 (GATGD), 124–125 (TT), Lys136, Lys145, and 163–166 (FLKT). Zn(2+) is bound by residues Glu178, His242, and His256.

Belongs to the sugar phosphate cyclases superfamily. Dehydroquinate synthase family. The cofactor is NAD(+). Co(2+) serves as cofactor. It depends on Zn(2+) as a cofactor.

It is found in the cytoplasm. It carries out the reaction 7-phospho-2-dehydro-3-deoxy-D-arabino-heptonate = 3-dehydroquinate + phosphate. The protein operates within metabolic intermediate biosynthesis; chorismate biosynthesis; chorismate from D-erythrose 4-phosphate and phosphoenolpyruvate: step 2/7. Catalyzes the conversion of 3-deoxy-D-arabino-heptulosonate 7-phosphate (DAHP) to dehydroquinate (DHQ). In Staphylococcus aureus (strain Mu50 / ATCC 700699), this protein is 3-dehydroquinate synthase.